The chain runs to 404 residues: MRLDTMKETPSSPVNTEMQDNFGCAVGNRFHQLLDDESDPLDFLYQSGVELTRRKKKEDAAAKKSANQKSGKKESQKDRKAAVVGGNTDVKMTPQTESGKVSQKDRKTFVVGGNTDVKVTQPGQKHAPKNMEKAPQNENVGSQVKVDRAERRPAFREVRPNIMDRSNEYSIEKPMEILDQDKQMRNYGGRGGMRGRGRGGFPRNTENDNLRGKREFDRHSGSDRAIRPEDKRGGSGPRNWGSIKEAFSEIEAIPVEEQIETTETTEATEEEHAKVPEEKNEGFSQEMSLDEWRSLQDQNRSKTEFNLRKPEAAVPTKAVVIHKSKFKNNLSENEEDYHYCFRKPVNDITAQLDINFGSLTRPSRGRGGGGRGRVRREEAFPHEVINVLADAPNPDDPEDFPALA.

Disordered stretches follow at residues 1 to 21, 51 to 288, and 359 to 379; these read MRLD…MQDN, LTRR…QEMS, and LTRP…REEA. Polar residues predominate over residues 8–19; that stretch reads ETPSSPVNTEMQ. Composition is skewed to basic and acidic residues over residues 71-81, 145-159, and 165-184; these read GKKESQKDRKA, KVDR…REVR, and RSNE…DKQM. Positions 188–200 are enriched in gly residues; sequence GGRGGMRGRGRGG. Basic and acidic residues-rich tracts occupy residues 205–233 and 270–281; these read TEND…DKRG and EEHAKVPEEKNE.

It belongs to the SERBP1-HABP4 family. Associates with ribosomes; promoting ribosome stabilization. Interacts with eef2/eEF2; promoting ribosome stabilization.

It is found in the nucleus. The protein localises to the cytoplasm. It localises to the stress granule. The protein resides in the nucleolus. Its subcellular location is the nucleus speckle. It is found in the cajal body. In terms of biological role, ribosome-binding protein that promotes ribosome hibernation, a process during which ribosomes are stabilized in an inactive state and preserved from proteasomal degradation. Acts via its association with eef2/eEF2 factor at the A-site of the ribosome, promoting ribosome stabilization in an inactive state compatible with storage. Plays a key role in ribosome hibernation in the mature egg by promoting ribosome stabilization. Ribosomes, which are produced in large quantities during oogenesis, are stored and translationally repressed in the egg and early embryo. The sequence is that of Intracellular hyaluronan-binding protein 4.L from Xenopus laevis (African clawed frog).